The chain runs to 286 residues: Polyamine aminopropyltransferase (286 aa).

One can recognise a PABS domain in the interval 5-238 (KIWHEKLHRH…GTMMFSWGTD (234 aa)). Positions 64 and 88 each coordinate spermidine. S-methyl-5'-thioadenosine contacts are provided by residues glutamate 108 and 140 to 141 (NG). Aspartate 158 serves as the catalytic Proton acceptor. Spermidine is bound at residue 158–161 (DSTD).

It belongs to the spermidine/spermine synthase family. In terms of assembly, homodimer or homotetramer.

The protein resides in the cytoplasm. The catalysed reaction is S-adenosyl 3-(methylsulfanyl)propylamine + putrescine = S-methyl-5'-thioadenosine + spermidine + H(+). Its pathway is amine and polyamine biosynthesis; spermidine biosynthesis; spermidine from putrescine: step 1/1. Functionally, catalyzes the irreversible transfer of a propylamine group from the amino donor S-adenosylmethioninamine (decarboxy-AdoMet) to putrescine (1,4-diaminobutane) to yield spermidine. This chain is Polyamine aminopropyltransferase, found in Buchnera aphidicola subsp. Schizaphis graminum (strain Sg).